Reading from the N-terminus, the 359-residue chain is Fructose-bisphosphate aldolase class 2 (359 aa).

Ser-62 serves as a coordination point for D-glyceraldehyde 3-phosphate. Asp-110 acts as the Proton donor in catalysis. 4 residues coordinate Zn(2+): His-111, Asp-145, Glu-175, and His-227. Residue Gly-228 participates in dihydroxyacetone phosphate binding. His-265 lines the Zn(2+) pocket. Dihydroxyacetone phosphate contacts are provided by residues Gly-266–Ser-268 and Asn-287–Thr-290.

The protein belongs to the class II fructose-bisphosphate aldolase family. Zn(2+) is required as a cofactor.

The enzyme catalyses beta-D-fructose 1,6-bisphosphate = D-glyceraldehyde 3-phosphate + dihydroxyacetone phosphate. It functions in the pathway carbohydrate degradation; glycolysis; D-glyceraldehyde 3-phosphate and glycerone phosphate from D-glucose: step 4/4. Catalyzes the aldol condensation of dihydroxyacetone phosphate (DHAP or glycerone-phosphate) with glyceraldehyde 3-phosphate (G3P) to form fructose 1,6-bisphosphate (FBP) in gluconeogenesis and the reverse reaction in glycolysis. In Buchnera aphidicola subsp. Baizongia pistaciae (strain Bp), this protein is Fructose-bisphosphate aldolase class 2 (fbaA).